The following is a 555-amino-acid chain: Dihydroxy-acid dehydratase (555 aa).

Asp78 serves as a coordination point for Mg(2+). Cys119 contributes to the [2Fe-2S] cluster binding site. Asp120 and Lys121 together coordinate Mg(2+). Lys121 carries the post-translational modification N6-carboxylysine. Cys195 provides a ligand contact to [2Fe-2S] cluster. Glu444 is a Mg(2+) binding site. The active-site Proton acceptor is the Ser470.

The protein belongs to the IlvD/Edd family. In terms of assembly, homodimer. Requires [2Fe-2S] cluster as cofactor. Mg(2+) serves as cofactor.

It catalyses the reaction (2R)-2,3-dihydroxy-3-methylbutanoate = 3-methyl-2-oxobutanoate + H2O. The enzyme catalyses (2R,3R)-2,3-dihydroxy-3-methylpentanoate = (S)-3-methyl-2-oxopentanoate + H2O. Its pathway is amino-acid biosynthesis; L-isoleucine biosynthesis; L-isoleucine from 2-oxobutanoate: step 3/4. It functions in the pathway amino-acid biosynthesis; L-valine biosynthesis; L-valine from pyruvate: step 3/4. Its function is as follows. Functions in the biosynthesis of branched-chain amino acids. Catalyzes the dehydration of (2R,3R)-2,3-dihydroxy-3-methylpentanoate (2,3-dihydroxy-3-methylvalerate) into 2-oxo-3-methylpentanoate (2-oxo-3-methylvalerate) and of (2R)-2,3-dihydroxy-3-methylbutanoate (2,3-dihydroxyisovalerate) into 2-oxo-3-methylbutanoate (2-oxoisovalerate), the penultimate precursor to L-isoleucine and L-valine, respectively. The sequence is that of Dihydroxy-acid dehydratase from Dehalococcoides mccartyi (strain CBDB1).